A 120-amino-acid polypeptide reads, in one-letter code: Large ribosomal subunit protein uL18 (120 aa).

The tract at residues 1–23 is disordered; that stretch reads MKLSRKESVRRRHQRVRRKINGT. Over residues 8–20 the composition is skewed to basic residues; that stretch reads SVRRRHQRVRRKI.

This sequence belongs to the universal ribosomal protein uL18 family. Part of the 50S ribosomal subunit; part of the 5S rRNA/L5/L18/L25 subcomplex. Contacts the 5S and 23S rRNAs.

Functionally, this is one of the proteins that bind and probably mediate the attachment of the 5S RNA into the large ribosomal subunit, where it forms part of the central protuberance. This is Large ribosomal subunit protein uL18 from Microcystis aeruginosa (strain NIES-843 / IAM M-2473).